Reading from the N-terminus, the 729-residue chain is Receptor-like protein 2 (729 aa).

A signal peptide spans Met-1–Ala-44. An N-cap region spans residues Val-45–Ile-82. Residues Val-45–Thr-707 lie on the Extracellular side of the membrane. N-linked (GlcNAc...) asparagine glycosylation is found at Asn-60 and Asn-71. LRR repeat units follow at residues Asp-89–Ile-113, His-114–Thr-137, Asp-139–Asn-163, Phe-168–Gln-193, Thr-195–Ser-219, Ser-220–Cys-244, Leu-245–Leu-268, Ser-269–Leu-292, Arg-293–Leu-316, Ser-317–Cys-340, Lys-342–Gln-364, Leu-365–Cys-389, Ser-391–Leu-413, Glu-414–Gln-437, Cys-439–Ser-464, Phe-468–Leu-492, Asn-493–Thr-515, Leu-516–Leu-540, Ala-542–Leu-560, and Asn-561–Arg-584. N-linked (GlcNAc...) asparagine glycans are attached at residues Asn-145 and Asn-163. Residues Asn-202 and Asn-205 are each glycosylated (N-linked (GlcNAc...) asparagine). N-linked (GlcNAc...) asparagine glycosylation is found at Asn-256, Asn-267, Asn-288, Asn-315, Asn-330, and Asn-339. A glycan (N-linked (GlcNAc...) asparagine) is linked at Asn-375. Asn-428 carries an N-linked (GlcNAc...) asparagine glycan. Residues Asn-564, Asn-587, Asn-611, Asn-622, Asn-635, Asn-657, and Asn-705 are each glycosylated (N-linked (GlcNAc...) asparagine). 3 LRR repeats span residues Leu-599–Leu-623, Thr-624–Leu-647, and Phe-649–Thr-672. A C-cap/acidic domain region spans residues Leu-690–Thr-707. Residues Phe-708 to Ala-728 form a helical membrane-spanning segment. Trp-729 is a topological domain (cytoplasmic).

Belongs to the RLP family.

The protein localises to the cell membrane. Its function is as follows. Involved in the perception of CLV3 and CLV3-like peptides, that act as extracellular signals regulating meristems maintenance. The sequence is that of Receptor-like protein 2 from Arabidopsis thaliana (Mouse-ear cress).